The chain runs to 515 residues: Pescadillo homolog (515 aa).

A coiled-coil region spans residues 270–327 (EVLAALNHTLKIIQTQEEDLEVDEFPIDPNSEDAEAIQAQKEEETKLERLKNLFSECK). The 94-residue stretch at 318–411 (RLKNLFSECK…KLLPVEEYFP (94 aa)) folds into the BRCT domain. Residues 477 to 515 (RLYEKIMHSKKKKRSEVRKLESKRKVHDEEKAKKKLKSS) form a disordered region. Residues 484–501 (HSKKKKRSEVRKLESKRK) show a composition bias toward basic residues.

The protein belongs to the pescadillo family.

It is found in the nucleus. The protein localises to the nucleolus. Its subcellular location is the nucleoplasm. In terms of biological role, required for maturation of ribosomal RNAs and formation of the large ribosomal subunit. The sequence is that of Pescadillo homolog from Nematostella vectensis (Starlet sea anemone).